The following is a 490-amino-acid chain: Cytochrome P450 2C39 (490 aa).

The N-terminal stretch at 1–25 (MDLVTFLVLTLSSLILLSLWRQSCG) is a signal peptide. Cys435 provides a ligand contact to heme.

It belongs to the cytochrome P450 family. The cofactor is heme. As to expression, liver.

The protein resides in the endoplasmic reticulum membrane. The protein localises to the microsome membrane. The catalysed reaction is an organic molecule + reduced [NADPH--hemoprotein reductase] + O2 = an alcohol + oxidized [NADPH--hemoprotein reductase] + H2O + H(+). The enzyme catalyses (5Z,8Z,11Z,14Z)-eicosatetraenoate + reduced [NADPH--hemoprotein reductase] + O2 = 11,12-epoxy-(5Z,8Z,14Z)-eicosatrienoate + oxidized [NADPH--hemoprotein reductase] + H2O + H(+). It catalyses the reaction (5Z,8Z,11Z,14Z)-eicosatetraenoate + reduced [NADPH--hemoprotein reductase] + O2 = 14,15-epoxy-(5Z,8Z,11Z)-eicosatrienoate + oxidized [NADPH--hemoprotein reductase] + H2O + H(+). Its pathway is lipid metabolism; arachidonate metabolism. Functionally, a cytochrome P450 monooxygenase that primarily catalyzes the epoxidation of 11,12 and 14,15 double bonds of (5Z,8Z,11Z,14Z)-eicosatetraenoic acid (arachidonate) forming 11,12- and 14,15-epoxyeicosatrienoic acids (11,12- and 14,15-EET) regioisomers. Mechanistically, uses molecular oxygen inserting one oxygen atom into a substrate, and reducing the second into a water molecule, with two electrons provided by NADPH via cytochrome P450 reductase (CPR; NADPH--hemoprotein reductase). The chain is Cytochrome P450 2C39 from Mus musculus (Mouse).